A 37-amino-acid polypeptide reads, in one-letter code: Small ribosomal subunit protein uS19 (37 aa).

Belongs to the universal ribosomal protein uS19 family.

In Helix lucorum (Snail), this protein is Small ribosomal subunit protein uS19 (RPS15).